A 299-amino-acid polypeptide reads, in one-letter code: ATP synthase gamma chain (299 aa).

Belongs to the ATPase gamma chain family. As to quaternary structure, F-type ATPases have 2 components, CF(1) - the catalytic core - and CF(0) - the membrane proton channel. CF(1) has five subunits: alpha(3), beta(3), gamma(1), delta(1), epsilon(1). CF(0) has three main subunits: a, b and c.

It localises to the cell membrane. Produces ATP from ADP in the presence of a proton gradient across the membrane. The gamma chain is believed to be important in regulating ATPase activity and the flow of protons through the CF(0) complex. In Levilactobacillus brevis (strain ATCC 367 / BCRC 12310 / CIP 105137 / JCM 1170 / LMG 11437 / NCIMB 947 / NCTC 947) (Lactobacillus brevis), this protein is ATP synthase gamma chain.